A 347-amino-acid polypeptide reads, in one-letter code: Phenylalanine--tRNA ligase alpha subunit (347 aa).

Glutamate 268 contributes to the Mg(2+) binding site.

This sequence belongs to the class-II aminoacyl-tRNA synthetase family. Phe-tRNA synthetase alpha subunit type 1 subfamily. Tetramer of two alpha and two beta subunits. The cofactor is Mg(2+).

The protein localises to the cytoplasm. The enzyme catalyses tRNA(Phe) + L-phenylalanine + ATP = L-phenylalanyl-tRNA(Phe) + AMP + diphosphate + H(+). The polypeptide is Phenylalanine--tRNA ligase alpha subunit (Leptothrix cholodnii (strain ATCC 51168 / LMG 8142 / SP-6) (Leptothrix discophora (strain SP-6))).